Here is a 488-residue protein sequence, read N- to C-terminus: Katanin p60 ATPase-containing subunit A-like 1 (488 aa).

The residue at position 1 (Met-1) is an N-acetylmethionine. Residues 95–179 (DPAVWPPPVP…GASDSEIPKF (85 aa)) are disordered. The span at 116–127 (PNREVRPLRKDV) shows a compositional bias: basic and acidic residues. Low complexity predominate over residues 128–138 (GAGARGLVGRA). Residues 142-167 (SKSDKPASRDKDYRARGRDDKARKNV) show a composition bias toward basic and acidic residues. The residue at position 172 (Ser-172) is a Phosphoserine. 246-253 (GPPGTGKT) is an ATP binding site.

This sequence belongs to the AAA ATPase family. Katanin p60 subunit A1 subfamily. A-like 1 sub-subfamily. In terms of assembly, interacts with KATNB1 and KATNBL1. As to expression, widely expressed, including in testis, brain, heart, lung, kidney, liver, spleen, seminal vesicles and ovary. In testis, restricted to Sertoli cells within the seminiferous epithelium (at protein level).

It is found in the cytoplasm. The protein resides in the cytoskeleton. Its subcellular location is the spindle pole. It localises to the spindle. The enzyme catalyses n ATP + n H2O + a microtubule = n ADP + n phosphate + (n+1) alpha/beta tubulin heterodimers.. Functionally, regulates microtubule dynamics in Sertoli cells, a process that is essential for spermiogenesis and male fertility. Severs microtubules in an ATP-dependent manner, promoting rapid reorganization of cellular microtubule arrays. Has microtubule-severing activity in vitro. In Mus musculus (Mouse), this protein is Katanin p60 ATPase-containing subunit A-like 1 (Katnal1).